We begin with the raw amino-acid sequence, 263 residues long: Endonuclease NucS (263 aa).

This sequence belongs to the NucS endonuclease family.

It is found in the cytoplasm. In terms of biological role, cleaves both 3' and 5' ssDNA extremities of branched DNA structures. The chain is Endonuclease NucS from Methanocaldococcus jannaschii (strain ATCC 43067 / DSM 2661 / JAL-1 / JCM 10045 / NBRC 100440) (Methanococcus jannaschii).